The chain runs to 47 residues: Large ribosomal subunit protein uL14c (47 aa).

Belongs to the universal ribosomal protein uL14 family. Part of the 50S ribosomal subunit.

The protein localises to the plastid. Its subcellular location is the chloroplast. Functionally, binds to 23S rRNA. The chain is Large ribosomal subunit protein uL14c (rpl14) from Vigna unguiculata (Cowpea).